A 735-amino-acid chain; its full sequence is Delta-1-pyrroline-5-carboxylate synthase 2 (735 aa).

The glutamate 5-kinase stretch occupies residues 1-315 (MGRGGIGGAG…WGCSKEATAR (315 aa)). Substrate contacts are provided by Ser-79, Asp-176, and Asn-195. ATP contacts are provided by residues 215–216 (SD), 221–226 (YSGPPS), and 255–261 (RGGMQAK). The interval 316-735 (EMAVAARDCS…VYTHRELPLQ (420 aa)) is gamma-glutamyl phosphate reductase.

The protein in the N-terminal section; belongs to the glutamate 5-kinase family. It in the C-terminal section; belongs to the gamma-glutamyl phosphate reductase family.

It catalyses the reaction L-glutamate + ATP = L-glutamyl 5-phosphate + ADP. It carries out the reaction L-glutamate 5-semialdehyde + phosphate + NADP(+) = L-glutamyl 5-phosphate + NADPH + H(+). It functions in the pathway amino-acid biosynthesis; L-proline biosynthesis; L-glutamate 5-semialdehyde from L-glutamate: step 1/2. It participates in amino-acid biosynthesis; L-proline biosynthesis; L-glutamate 5-semialdehyde from L-glutamate: step 2/2. Its activity is regulated as follows. Feedback regulated by proline. P5CS plays a key role in proline biosynthesis, leading to osmoregulation in plants. Involved in abiotic stress tolerance. The sequence is that of Delta-1-pyrroline-5-carboxylate synthase 2 from Oryza sativa subsp. japonica (Rice).